A 381-amino-acid chain; its full sequence is Heme A synthase (381 aa).

A run of 5 helical transmembrane segments spans residues 25–45 (GAVR…VAVG), 112–132 (LLGR…WWRG), 138–158 (LLLG…IGWI), 176–196 (LALH…LAAG), and 212–232 (VAGL…LVAG). His277 serves as a coordination point for heme. 3 helical membrane-spanning segments follow: residues 279–299 (LFAY…VRMA), 307–327 (AMGV…TLLL), and 329–349 (VPLW…IMAT). His337 contacts heme.

It belongs to the COX15/CtaA family. Type 2 subfamily. In terms of assembly, interacts with CtaB. Heme b serves as cofactor.

The protein localises to the cell membrane. It catalyses the reaction Fe(II)-heme o + 2 A + H2O = Fe(II)-heme a + 2 AH2. The protein operates within porphyrin-containing compound metabolism; heme A biosynthesis; heme A from heme O: step 1/1. Its function is as follows. Catalyzes the conversion of heme O to heme A by two successive hydroxylations of the methyl group at C8. The first hydroxylation forms heme I, the second hydroxylation results in an unstable dihydroxymethyl group, which spontaneously dehydrates, resulting in the formyl group of heme A. In Methylorubrum populi (strain ATCC BAA-705 / NCIMB 13946 / BJ001) (Methylobacterium populi), this protein is Heme A synthase.